A 314-amino-acid chain; its full sequence is Coiled-coil domain-containing protein 42 like-2 (314 aa).

Coiled coils occupy residues 34–133 (RLLE…KGTL) and 175–231 (NKLL…FQWE).

It belongs to the CFAP73 family.

The sequence is that of Coiled-coil domain-containing protein 42 like-2 from Xenopus tropicalis (Western clawed frog).